Here is a 1008-residue protein sequence, read N- to C-terminus: Retinoblastoma-related protein (1008 aa).

Positions 375–394 are disordered; sequence KRKVDSMTSPTKTITSPLSP. A compositionally biased stretch (polar residues) spans 380–392; sequence SMTSPTKTITSPL. The tract at residues 404-605 is domain A; the sequence is TPVSTAMTTA…EKGSSMYNSL (202 aa). The interval 404–853 is pocket; it reads TPVSTAMTTA…NEVFIPSVKP (450 aa). Residues 606 to 722 are spacer; the sequence is TIARPNLSNE…HPTRGETCGE (117 aa). The tract at residues 723-853 is domain B; that stretch reads TAVNLFFSKI…NEVFIPSVKP (131 aa). Disordered stretches follow at residues 865–899 and 988–1008; these read KNPN…SLPD and LQNG…LKTE.

This sequence belongs to the retinoblastoma protein (RB) family.

It is found in the nucleus. Its function is as follows. Regulator of biological processes that recruits a histone deacetylase to control gene transcription. May play a role in the entry into mitosis, negatively regulating the cell proliferation. Formation of stable complexes with geminiviridae replication-associated proteins may create a cellular environment which favors viral DNA replication. This Pilosella officinarum (Mouse-ear hawkweed) protein is Retinoblastoma-related protein (RBR).